The chain runs to 426 residues: Tryptophan synthase beta chain (426 aa).

Lys-108 carries the post-translational modification N6-(pyridoxal phosphate)lysine.

It belongs to the TrpB family. As to quaternary structure, tetramer of two alpha and two beta chains. The cofactor is pyridoxal 5'-phosphate.

It catalyses the reaction (1S,2R)-1-C-(indol-3-yl)glycerol 3-phosphate + L-serine = D-glyceraldehyde 3-phosphate + L-tryptophan + H2O. Its pathway is amino-acid biosynthesis; L-tryptophan biosynthesis; L-tryptophan from chorismate: step 5/5. Functionally, the beta subunit is responsible for the synthesis of L-tryptophan from indole and L-serine. This is Tryptophan synthase beta chain (trpB) from Thermoplasma volcanium (strain ATCC 51530 / DSM 4299 / JCM 9571 / NBRC 15438 / GSS1).